The sequence spans 250 residues: Probable transcriptional regulatory protein Cvib_1432 (250 aa).

This sequence belongs to the TACO1 family.

It is found in the cytoplasm. This is Probable transcriptional regulatory protein Cvib_1432 from Chlorobium phaeovibrioides (strain DSM 265 / 1930) (Prosthecochloris vibrioformis (strain DSM 265)).